Here is a 103-residue protein sequence, read N- to C-terminus: Large ribosomal subunit protein bL21 (103 aa).

This sequence belongs to the bacterial ribosomal protein bL21 family. Part of the 50S ribosomal subunit. Contacts protein L20.

Its function is as follows. This protein binds to 23S rRNA in the presence of protein L20. This Chromohalobacter salexigens (strain ATCC BAA-138 / DSM 3043 / CIP 106854 / NCIMB 13768 / 1H11) protein is Large ribosomal subunit protein bL21.